The primary structure comprises 248 residues: 14-3-3 protein zeta (248 aa).

It belongs to the 14-3-3 family. As to quaternary structure, homodimer.

It localises to the cytoplasm. Adapter protein implicated in the regulation of a large spectrum of both general and specialized signaling pathways. Binds to a large number of partners, usually by recognition of a phosphoserine or phosphothreonine motif. Binding generally results in the modulation of the activity of the binding partner. The sequence is that of 14-3-3 protein zeta (14-3-3zeta) from Aedes aegypti (Yellowfever mosquito).